A 366-amino-acid chain; its full sequence is Cobalt-precorrin-5B C(1)-methyltransferase (366 aa).

It belongs to the CbiD family.

It catalyses the reaction Co-precorrin-5B + S-adenosyl-L-methionine = Co-precorrin-6A + S-adenosyl-L-homocysteine. The protein operates within cofactor biosynthesis; adenosylcobalamin biosynthesis; cob(II)yrinate a,c-diamide from sirohydrochlorin (anaerobic route): step 6/10. Catalyzes the methylation of C-1 in cobalt-precorrin-5B to form cobalt-precorrin-6A. The protein is Cobalt-precorrin-5B C(1)-methyltransferase of Thermus thermophilus (strain ATCC BAA-163 / DSM 7039 / HB27).